A 238-amino-acid polypeptide reads, in one-letter code: Uridylate kinase (238 aa).

12–15 (KLSG) contacts ATP. Gly-54 is a UMP binding site. The ATP site is built by Gly-55 and Arg-59. UMP contacts are provided by residues Asp-74 and 135 to 142 (TGNPYFST). Residues Tyr-168 and Asp-171 each coordinate ATP.

The protein belongs to the UMP kinase family. As to quaternary structure, homohexamer.

The protein resides in the cytoplasm. The catalysed reaction is UMP + ATP = UDP + ADP. It functions in the pathway pyrimidine metabolism; CTP biosynthesis via de novo pathway; UDP from UMP (UMPK route): step 1/1. Its activity is regulated as follows. Inhibited by UTP. In terms of biological role, catalyzes the reversible phosphorylation of UMP to UDP. This chain is Uridylate kinase, found in Syntrophomonas wolfei subsp. wolfei (strain DSM 2245B / Goettingen).